The chain runs to 29 residues: SCSSGCSDCNSDSCQCTLNQFTNSDSCCC.

Contains 4 disulfide bonds. As to expression, expressed by the venom duct.

Its subcellular location is the secreted. This is Augerpeptide hheTx2 from Hastula hectica (Sea snail).